Reading from the N-terminus, the 211-residue chain is Arginine exporter protein ArgO (211 aa).

A run of 6 helical transmembrane segments spans residues 1–21, 37–57, 68–88, 111–131, 147–167, and 182–202; these read MFSY…PLGP, IMIA…GIFG, LLAL…FGAF, IIAT…DTFV, WFAL…AILA, and IINL…ARDG.

This sequence belongs to the LysE/ArgO transporter (TC 2.A.75) family.

It is found in the cell inner membrane. The catalysed reaction is L-arginine(in) = L-arginine(out). Functionally, involved in the export of arginine. Important to control the intracellular level of arginine and the correct balance between arginine and lysine. This is Arginine exporter protein ArgO from Escherichia coli O157:H7.